Consider the following 317-residue polypeptide: Acetyl-coenzyme A carboxylase carboxyl transferase subunit alpha (317 aa).

The region spanning 39–293 is the CoA carboxyltransferase C-terminal domain; the sequence is RLESRVNDAM…GDVIAKALAD (255 aa).

This sequence belongs to the AccA family. In terms of assembly, acetyl-CoA carboxylase is a heterohexamer composed of biotin carboxyl carrier protein (AccB), biotin carboxylase (AccC) and two subunits each of ACCase subunit alpha (AccA) and ACCase subunit beta (AccD).

The protein resides in the cytoplasm. It catalyses the reaction N(6)-carboxybiotinyl-L-lysyl-[protein] + acetyl-CoA = N(6)-biotinyl-L-lysyl-[protein] + malonyl-CoA. It participates in lipid metabolism; malonyl-CoA biosynthesis; malonyl-CoA from acetyl-CoA: step 1/1. Its function is as follows. Component of the acetyl coenzyme A carboxylase (ACC) complex. First, biotin carboxylase catalyzes the carboxylation of biotin on its carrier protein (BCCP) and then the CO(2) group is transferred by the carboxyltransferase to acetyl-CoA to form malonyl-CoA. In Agrobacterium fabrum (strain C58 / ATCC 33970) (Agrobacterium tumefaciens (strain C58)), this protein is Acetyl-coenzyme A carboxylase carboxyl transferase subunit alpha.